The primary structure comprises 81 residues: Photosystem I iron-sulfur center (81 aa).

4Fe-4S ferredoxin-type domains lie at 2–31 (SHSV…MIPW) and 39–68 (IASA…VRVY). [4Fe-4S] cluster is bound by residues cysteine 11, cysteine 14, cysteine 17, cysteine 21, cysteine 48, cysteine 51, cysteine 54, and cysteine 58.

In terms of assembly, the eukaryotic PSI reaction center is composed of at least 11 subunits. Requires [4Fe-4S] cluster as cofactor.

The protein resides in the plastid. It localises to the chloroplast thylakoid membrane. It carries out the reaction reduced [plastocyanin] + hnu + oxidized [2Fe-2S]-[ferredoxin] = oxidized [plastocyanin] + reduced [2Fe-2S]-[ferredoxin]. Apoprotein for the two 4Fe-4S centers FA and FB of photosystem I (PSI); essential for photochemical activity. FB is the terminal electron acceptor of PSI, donating electrons to ferredoxin. The C-terminus interacts with PsaA/B/D and helps assemble the protein into the PSI complex. Required for binding of PsaD and PsaE to PSI. PSI is a plastocyanin-ferredoxin oxidoreductase, converting photonic excitation into a charge separation, which transfers an electron from the donor P700 chlorophyll pair to the spectroscopically characterized acceptors A0, A1, FX, FA and FB in turn. This Arabis hirsuta (Hairy rock-cress) protein is Photosystem I iron-sulfur center.